We begin with the raw amino-acid sequence, 183 residues long: Hypoxanthine/guanine phosphoribosyltransferase (183 aa).

This sequence belongs to the purine/pyrimidine phosphoribosyltransferase family. Archaeal HPRT subfamily. As to quaternary structure, homodimer.

Its subcellular location is the cytoplasm. The catalysed reaction is IMP + diphosphate = hypoxanthine + 5-phospho-alpha-D-ribose 1-diphosphate. It carries out the reaction GMP + diphosphate = guanine + 5-phospho-alpha-D-ribose 1-diphosphate. It participates in purine metabolism; IMP biosynthesis via salvage pathway; IMP from hypoxanthine: step 1/1. Its function is as follows. Catalyzes a salvage reaction resulting in the formation of IMP that is energically less costly than de novo synthesis. This Methanotorris igneus (strain DSM 5666 / JCM 11834 / Kol 5) protein is Hypoxanthine/guanine phosphoribosyltransferase.